Consider the following 98-residue polypeptide: Integration host factor subunit alpha (98 aa).

The interval Phe49–Pro72 is disordered.

It belongs to the bacterial histone-like protein family. As to quaternary structure, heterodimer of an alpha and a beta chain.

Functionally, this protein is one of the two subunits of integration host factor, a specific DNA-binding protein that functions in genetic recombination as well as in transcriptional and translational control. This is Integration host factor subunit alpha from Shewanella loihica (strain ATCC BAA-1088 / PV-4).